Consider the following 209-residue polypeptide: Small ribosomal subunit protein uS4 (209 aa).

The disordered stretch occupies residues 22–45; it reads RGRNPLLRKPNPPGQHGMQRKKKS. The region spanning 93 to 154 is the S4 RNA-binding domain; that stretch reads CRLDSIVYRL…KSKRLAIVTE (62 aa).

This sequence belongs to the universal ribosomal protein uS4 family. Part of the 30S ribosomal subunit. Contacts protein S5. The interaction surface between S4 and S5 is involved in control of translational fidelity.

Its function is as follows. One of the primary rRNA binding proteins, it binds directly to 16S rRNA where it nucleates assembly of the body of the 30S subunit. With S5 and S12 plays an important role in translational accuracy. The polypeptide is Small ribosomal subunit protein uS4 (Chlamydia trachomatis serovar L2 (strain ATCC VR-902B / DSM 19102 / 434/Bu)).